The sequence spans 109 residues: Small ribosomal subunit protein uS17 (109 aa).

This sequence belongs to the universal ribosomal protein uS17 family. Part of the 30S ribosomal subunit.

In terms of biological role, one of the primary rRNA binding proteins, it binds specifically to the 5'-end of 16S ribosomal RNA. This Methanococcus vannielii protein is Small ribosomal subunit protein uS17.